The sequence spans 245 residues: Carbohydrate deacetylase (245 aa).

Residues His59 and His121 each contribute to the Mg(2+) site.

This sequence belongs to the YdjC deacetylase family. In terms of assembly, homodimer. It depends on Mg(2+) as a cofactor.

Its function is as follows. Probably catalyzes the deacetylation of acetylated carbohydrates an important step in the degradation of oligosaccharides. In Clostridium beijerinckii (strain ATCC 51743 / NCIMB 8052) (Clostridium acetobutylicum), this protein is Carbohydrate deacetylase.